Reading from the N-terminus, the 288-residue chain is Acetyl-coenzyme A carboxylase carboxyl transferase subunit beta (288 aa).

A CoA carboxyltransferase N-terminal domain is found at 32–288 (LFAKCPACKH…LELHTEVENV (257 aa)). Positions 36, 39, 54, and 57 each coordinate Zn(2+). Residues 36–57 (CPACKHTIYQKDLGKNKVCPNC) form a C4-type zinc finger.

Belongs to the AccD/PCCB family. As to quaternary structure, acetyl-CoA carboxylase is a heterohexamer composed of biotin carboxyl carrier protein (AccB), biotin carboxylase (AccC) and two subunits each of ACCase subunit alpha (AccA) and ACCase subunit beta (AccD). Zn(2+) serves as cofactor.

Its subcellular location is the cytoplasm. It catalyses the reaction N(6)-carboxybiotinyl-L-lysyl-[protein] + acetyl-CoA = N(6)-biotinyl-L-lysyl-[protein] + malonyl-CoA. It functions in the pathway lipid metabolism; malonyl-CoA biosynthesis; malonyl-CoA from acetyl-CoA: step 1/1. In terms of biological role, component of the acetyl coenzyme A carboxylase (ACC) complex. Biotin carboxylase (BC) catalyzes the carboxylation of biotin on its carrier protein (BCCP) and then the CO(2) group is transferred by the transcarboxylase to acetyl-CoA to form malonyl-CoA. This Lactococcus lactis subsp. cremoris (strain MG1363) protein is Acetyl-coenzyme A carboxylase carboxyl transferase subunit beta.